A 339-amino-acid polypeptide reads, in one-letter code: Phosphate acyltransferase (339 aa).

The protein belongs to the PlsX family. Homodimer. Probably interacts with PlsY.

The protein localises to the cytoplasm. It carries out the reaction a fatty acyl-[ACP] + phosphate = an acyl phosphate + holo-[ACP]. It participates in lipid metabolism; phospholipid metabolism. In terms of biological role, catalyzes the reversible formation of acyl-phosphate (acyl-PO(4)) from acyl-[acyl-carrier-protein] (acyl-ACP). This enzyme utilizes acyl-ACP as fatty acyl donor, but not acyl-CoA. The sequence is that of Phosphate acyltransferase from Clostridium perfringens (strain ATCC 13124 / DSM 756 / JCM 1290 / NCIMB 6125 / NCTC 8237 / Type A).